We begin with the raw amino-acid sequence, 281 residues long: Ribosomal protein L11 methyltransferase (281 aa).

Positions 133, 154, 175, and 216 each coordinate S-adenosyl-L-methionine.

It belongs to the methyltransferase superfamily. PrmA family.

Its subcellular location is the cytoplasm. The catalysed reaction is L-lysyl-[protein] + 3 S-adenosyl-L-methionine = N(6),N(6),N(6)-trimethyl-L-lysyl-[protein] + 3 S-adenosyl-L-homocysteine + 3 H(+). In terms of biological role, methylates ribosomal protein L11. The chain is Ribosomal protein L11 methyltransferase from Campylobacter jejuni subsp. jejuni serotype O:23/36 (strain 81-176).